The sequence spans 125 residues: Mitochondrial import inner membrane translocase subunit TIM16 (125 aa).

The interval Glu58–Arg110 is J-like. Ser69 carries the post-translational modification Phosphoserine.

This sequence belongs to the TIM16/PAM16 family. As to quaternary structure, probable component of the PAM complex at least composed of a mitochondrial HSP70 protein, GRPEL1 or GRPEL2, TIMM44, TIMM16/PAM16 and TIMM14/DNAJC19. Interacts with DNAJC19. Directly interacts with DNAJC15; this interaction counteracts DNAJC15-dependent stimulation of HSPA9 ATPase activity. Associates with the TIM23 complex. Expressed in trabecular bone and cartilage and by differentiated chondrocytes localized in the hypertrophic zone and by osteoblasts at early developmental stages.

It localises to the mitochondrion inner membrane. Its function is as follows. Regulates ATP-dependent protein translocation into the mitochondrial matrix. Inhibits DNAJC19 stimulation of HSPA9/Mortalin ATPase activity. This Mus musculus (Mouse) protein is Mitochondrial import inner membrane translocase subunit TIM16.